The chain runs to 137 residues: Acetyltransferase Atu2258 (137 aa).

The region spanning Met1–Phe137 is the N-acetyltransferase domain. Residues Leu66–Val68, Gly74, and Arg108–Tyr110 each bind CoA.

Its function is as follows. Catalyzes the transfer of an acetyl group from acetyl coenzyme A (AcCoA) to an acceptor substrate and releases both CoA and the acetylated product. It prefers glucosamine 6-phosphate or dopamine. It can also use the thialysine, N(8)-acetylspermidine, chloramphenicol, puromycin, polymyxin B, and 4-aminobutyrate ethyl ester. This Agrobacterium fabrum (strain C58 / ATCC 33970) (Agrobacterium tumefaciens (strain C58)) protein is Acetyltransferase Atu2258.